Reading from the N-terminus, the 130-residue chain is MSLQICILTPDRVFWNQEAEEIILPTNTGQMGVLTNHAPIITALDIGIMSIRTQKDWTSVALMGGFALVKQNQVTVLVNSAESKETINSSEAEQAFLEAKEQLEKALGQKEKVEANFAFKRARARYQLVS.

This sequence belongs to the ATPase epsilon chain family. As to quaternary structure, F-type ATPases have 2 components, CF(1) - the catalytic core - and CF(0) - the membrane proton channel. CF(1) has five subunits: alpha(3), beta(3), gamma(1), delta(1), epsilon(1). CF(0) has three main subunits: a, b and c.

It localises to the plastid. The protein localises to the chloroplast thylakoid membrane. Its function is as follows. Produces ATP from ADP in the presence of a proton gradient across the membrane. In Tupiella akineta (Green alga), this protein is ATP synthase epsilon chain, chloroplastic.